Consider the following 178-residue polypeptide: Probable chorismate pyruvate-lyase (178 aa).

Arginine 73, leucine 111, and glutamate 163 together coordinate substrate.

It belongs to the UbiC family.

It localises to the cytoplasm. The enzyme catalyses chorismate = 4-hydroxybenzoate + pyruvate. It participates in cofactor biosynthesis; ubiquinone biosynthesis. In terms of biological role, removes the pyruvyl group from chorismate, with concomitant aromatization of the ring, to provide 4-hydroxybenzoate (4HB) for the ubiquinone pathway. The polypeptide is Probable chorismate pyruvate-lyase (Pseudomonas aeruginosa (strain ATCC 15692 / DSM 22644 / CIP 104116 / JCM 14847 / LMG 12228 / 1C / PRS 101 / PAO1)).